Reading from the N-terminus, the 393-residue chain is Ribonuclease D (393 aa).

The 3'-5' exonuclease domain occupies 14-181 (LITTTEDLTG…VYQLLLERLE (168 aa)). The HRDC domain maps to 219-300 (NRRMLGVLRA…AAARALPDGA (82 aa)).

This sequence belongs to the RNase D family. The cofactor is a divalent metal cation.

The protein resides in the cytoplasm. It carries out the reaction Exonucleolytic cleavage that removes extra residues from the 3'-terminus of tRNA to produce 5'-mononucleotides.. In terms of biological role, exonuclease involved in the 3' processing of various precursor tRNAs. Initiates hydrolysis at the 3'-terminus of an RNA molecule and releases 5'-mononucleotides. This Gluconacetobacter diazotrophicus (strain ATCC 49037 / DSM 5601 / CCUG 37298 / CIP 103539 / LMG 7603 / PAl5) protein is Ribonuclease D.